A 1608-amino-acid polypeptide reads, in one-letter code: Hemolysin (1608 aa).

The N-terminal stretch at 1–30 (MKNNNFRLSAAGKLAAALAIILAASAGAYA) is a signal peptide. Disordered stretches follow at residues 296 to 315 (SRVD…QNYR), 452 to 488 (KSSE…LRSE), 716 to 737 (EHTR…LSGG), 971 to 1030 (AVNL…SASQ), 1168 to 1199 (AEST…TGGN), and 1437 to 1469 (PQQD…QGPL). Composition is skewed to polar residues over residues 303 to 313 (SNKNGGDNYQN) and 460 to 474 (RNHT…WSNS). Basic and acidic residues-rich tracts occupy residues 478–488 (ESLKASELRSE) and 716–726 (EHTRDSEKTTR). Residues 727 to 736 (TENSASSLSG) show a composition bias toward polar residues. Basic and acidic residues predominate over residues 977–996 (DSHRSEAAANRQDEQSRDTR). A compositionally biased stretch (polar residues) spans 1021 to 1030 (TQRSNSSASQ).

The protein resides in the cell outer membrane. Its function is as follows. Bacterial hemolysins are exotoxins that attack blood cell membranes and cause cell rupture by mechanisms not clearly defined. Functionally, cell-bound hemolysin, which releases heme-iron from erythrocytes by interaction with the erythrocyte membrane. ShlA requires ShlB function. The polypeptide is Hemolysin (shlA) (Serratia marcescens).